A 243-amino-acid chain; its full sequence is Proteasome subunit beta (243 aa).

Positions 1 to 49 are cleaved as a propeptide — removed in mature form; by autocatalysis; it reads MRTPTGDLSDGPAEELGRDQPVFGPEIGEFEHSERRAAQADGEGEMKTG. Residues 1–50 form a disordered region; that stretch reads MRTPTGDLSDGPAEELGRDQPVFGPEIGEFEHSERRAAQADGEGEMKTGT. The span at 29–38 shows a compositional bias: basic and acidic residues; the sequence is EFEHSERRAA. Thr50 acts as the Nucleophile in catalysis.

This sequence belongs to the peptidase T1B family. In terms of assembly, the 20S proteasome core is composed of 14 alpha and 14 beta subunits that assemble into four stacked heptameric rings, resulting in a barrel-shaped structure. The two inner rings, each composed of seven catalytic beta subunits, are sandwiched by two outer rings, each composed of seven alpha subunits. The catalytic chamber with the active sites is on the inside of the barrel. Has a gated structure, the ends of the cylinder being occluded by the N-termini of the alpha-subunits. Is capped at one or both ends by the proteasome regulatory ATPase, PAN.

The protein resides in the cytoplasm. The enzyme catalyses Cleavage of peptide bonds with very broad specificity.. With respect to regulation, the formation of the proteasomal ATPase PAN-20S proteasome complex, via the docking of the C-termini of PAN into the intersubunit pockets in the alpha-rings, triggers opening of the gate for substrate entry. Interconversion between the open-gate and close-gate conformations leads to a dynamic regulation of the 20S proteasome proteolysis activity. Component of the proteasome core, a large protease complex with broad specificity involved in protein degradation. This chain is Proteasome subunit beta, found in Halorubrum lacusprofundi (strain ATCC 49239 / DSM 5036 / JCM 8891 / ACAM 34).